The following is a 481-amino-acid chain: MSPQTETKTSVGFKAGVKDYKLTYYTPDYETKPTDILAAFRVTPQPGVPPEEAGAAVAAESSTGTWTTVWTDGLTSLDRYKGRCYHIERVFGEKDQYIAYVAYPLDLFEEGSVTNMFTSIVGNVFGFKALRALRLEDLRIPPAYTKTFQGPPHGIQVERDKLNKYGRPLLGCTIKPKLGLSAKNYGRAVYECLRGGLDFTKDDENVNSQPFMRWRDRFLFCAEAIYKSQAETGEIKGHYLNATAGTCEEMLRRACFAKELGVPIIMHDYLTGGFTANTSLAHFCRENGLLLHIHRAMHAVIDRQKNHGIHFRVLAKALRLSGGDHIHAGTVVGKLEGEREITLGFVDLLRDNFVEKDRSRGIYFTQDWVSLPGVLPVASGGIHVWHMPALTDIFGDDSVLQFGGGTLGHPWGNAPGAVANRVALEACVQARNEGLNLAQDGNSIIRQASKWSPELAAACEVWKEIQFNFKSVDTLDLNEIK.

Residues 1–2 constitute a propeptide that is removed on maturation; sequence MS. Proline 3 is subject to N-acetylproline. At lysine 14 the chain carries N6,N6,N6-trimethyllysine. Substrate contacts are provided by asparagine 123 and threonine 173. Lysine 175 serves as the catalytic Proton acceptor. Lysine 177 provides a ligand contact to substrate. Lysine 201, aspartate 203, and glutamate 204 together coordinate Mg(2+). Lysine 201 carries the post-translational modification N6-carboxylysine. Residue histidine 294 is the Proton acceptor of the active site. Arginine 295, histidine 327, and serine 379 together coordinate substrate.

Belongs to the RuBisCO large chain family. Type I subfamily. As to quaternary structure, heterohexadecamer of 8 large chains and 8 small chains; disulfide-linked. The disulfide link is formed within the large subunit homodimers. It depends on Mg(2+) as a cofactor. Post-translationally, the disulfide bond which can form in the large chain dimeric partners within the hexadecamer appears to be associated with oxidative stress and protein turnover.

It is found in the plastid. It catalyses the reaction 2 (2R)-3-phosphoglycerate + 2 H(+) = D-ribulose 1,5-bisphosphate + CO2 + H2O. The enzyme catalyses D-ribulose 1,5-bisphosphate + O2 = 2-phosphoglycolate + (2R)-3-phosphoglycerate + 2 H(+). Its function is as follows. RuBisCO catalyzes two reactions: the carboxylation of D-ribulose 1,5-bisphosphate, the primary event in carbon dioxide fixation, as well as the oxidative fragmentation of the pentose substrate in the photorespiration process. Both reactions occur simultaneously and in competition at the same active site. This is Ribulose bisphosphate carboxylase large chain from Cuscuta gronovii (Common dodder).